The chain runs to 90 residues: Small ribosomal subunit protein uS17 (90 aa).

This sequence belongs to the universal ribosomal protein uS17 family. As to quaternary structure, part of the 30S ribosomal subunit.

One of the primary rRNA binding proteins, it binds specifically to the 5'-end of 16S ribosomal RNA. This Burkholderia ambifaria (strain ATCC BAA-244 / DSM 16087 / CCUG 44356 / LMG 19182 / AMMD) (Burkholderia cepacia (strain AMMD)) protein is Small ribosomal subunit protein uS17.